The chain runs to 293 residues: tRNA (guanine-N(7)-)-methyltransferase (293 aa).

Positions 1-31 (MGGDKIKKDKRQKREDYRAAMRKDDISELPR) are enriched in basic and acidic residues. Disordered stretches follow at residues 1–33 (MGGDKIKKDKRQKREDYRAAMRKDDISELPRKK) and 68–97 (IVDEPTTTSPPPPPPVPEQTPSEPDLTPLR). A compositionally biased stretch (pro residues) spans 75–85 (TSPPPPPPVPE). Residues Gly111, 134-135 (EI), 169-170 (NT), and Cys189 each bind S-adenosyl-L-methionine. The active site involves Asp192. An S-adenosyl-L-methionine-binding site is contributed by 267-269 (TEE).

This sequence belongs to the class I-like SAM-binding methyltransferase superfamily. TrmB family. As to quaternary structure, forms a complex with TRM82.

The protein resides in the nucleus. It catalyses the reaction guanosine(46) in tRNA + S-adenosyl-L-methionine = N(7)-methylguanosine(46) in tRNA + S-adenosyl-L-homocysteine. The protein operates within tRNA modification; N(7)-methylguanine-tRNA biosynthesis. Functionally, catalyzes the formation of N(7)-methylguanine at position 46 (m7G46) in tRNA. This is tRNA (guanine-N(7)-)-methyltransferase from Chaetomium globosum (strain ATCC 6205 / CBS 148.51 / DSM 1962 / NBRC 6347 / NRRL 1970) (Soil fungus).